The following is a 273-amino-acid chain: Cyclic di-AMP synthase CdaA (273 aa).

The next 3 membrane-spanning stretches (helical) occupy residues 12 to 32 (LGNA…IMVI), 40 to 60 (LLKG…LGLS), and 61 to 81 (TLQW…IIIF). The DAC domain occupies 82 to 242 (QPELRRALEQ…NGDLHRELTE (161 aa)).

Belongs to the adenylate cyclase family. DacA/CdaA subfamily. Probably a homodimer. Interacts with CdaR. May interact with GlmM.

The protein localises to the cell membrane. The enzyme catalyses 2 ATP = 3',3'-c-di-AMP + 2 diphosphate. Its activity is regulated as follows. DAC activity is stimulated about 20-fold in E.coli by coexpression with CdaR. Its function is as follows. One of 3 paralogous diadenylate cyclases (DAC) in this bacteria, catalyzing the condensation of 2 ATP molecules into cyclic di-AMP (c-di-AMP). Upon expression in E.coli leads to c-di-AMP synthesis. Probably the main producer of c-di-AMP for the cell; is probably implicated in control of peptidoglycan synthesis. In B.subtilis c-di-AMP is a second messenger that mediates growth, DNA repair and cell wall homeostasis; it is toxic when present in excess. In Bacillus subtilis (strain 168), this protein is Cyclic di-AMP synthase CdaA.